The chain runs to 188 residues: RNA 2',3'-cyclic phosphodiesterase (188 aa).

The active-site Proton donor is the His42. 2 consecutive short sequence motifs (HXTX) follow at residues 42–45 (HMTL) and 130–133 (HVTI). The active-site Proton acceptor is His130.

The protein belongs to the 2H phosphoesterase superfamily. ThpR family.

It catalyses the reaction a 3'-end 2',3'-cyclophospho-ribonucleotide-RNA + H2O = a 3'-end 2'-phospho-ribonucleotide-RNA + H(+). In terms of biological role, hydrolyzes RNA 2',3'-cyclic phosphodiester to an RNA 2'-phosphomonoester. In Aquifex aeolicus (strain VF5), this protein is RNA 2',3'-cyclic phosphodiesterase.